Reading from the N-terminus, the 193-residue chain is Phosphoheptose isomerase (193 aa).

Residues 37–193 form the SIS domain; the sequence is LAASFKADGK…QLIEKEMASV (157 aa). 52–54 is a substrate binding site; sequence NGG. The Zn(2+) site is built by H61 and E65. Residues E65, 93 to 94, 119 to 121, S124, and Q172 each bind substrate; these read ND and STS. Residues Q172 and H180 each contribute to the Zn(2+) site.

This sequence belongs to the SIS family. GmhA subfamily. In terms of assembly, homotetramer. Zn(2+) is required as a cofactor.

It localises to the cytoplasm. It catalyses the reaction 2 D-sedoheptulose 7-phosphate = D-glycero-alpha-D-manno-heptose 7-phosphate + D-glycero-beta-D-manno-heptose 7-phosphate. Its pathway is carbohydrate biosynthesis; D-glycero-D-manno-heptose 7-phosphate biosynthesis; D-glycero-alpha-D-manno-heptose 7-phosphate and D-glycero-beta-D-manno-heptose 7-phosphate from sedoheptulose 7-phosphate: step 1/1. Catalyzes the isomerization of sedoheptulose 7-phosphate in D-glycero-D-manno-heptose 7-phosphate. The chain is Phosphoheptose isomerase from Edwardsiella ictaluri (strain 93-146).